A 463-amino-acid chain; its full sequence is MKSFDEMTPKEIVRELDKYIVGQTEAKKAVAIAVRNRIRRQKLPEEWRKEVLPKNILMIGPTGVGKTEIARRLAQLSGSPFLKVEATRFTEVGYVGKNVDSMIRDLVEISVNMVKQEKMKEVEERAKELVEERILDALVPESRAVPAITNPFINLITGGQQQQYTPEDRRRFRAKREEMRERLRRGELEDEEIEVEIEETASPFMGIFGPGMEDLGIEISNMFSGMLPKRKKKRKMKVSEARKVLLPMEAEKLIDMDKVIQEALDRAQNRGIIFIDEIDKIAGKESASGPDVSRQGVQRDLLPIVEGTTIMTKYGPVRTDYILFIAAGAFHVSRPSDLIPELQGRFPIRVELSPLTEEDFVRILKEPENAIIKQYQALLSTEGVELVFTEDGIREMARIAYQLNQRLENIGARRLYTVAEKVLEEISFEAPDIPEKKVVIDAEYVRKRLERIVQDEDLSAYIL.

ATP-binding positions include valine 21, 63–68 (GVGKTE), aspartate 276, glutamate 341, and arginine 413.

The protein belongs to the ClpX chaperone family. HslU subfamily. A double ring-shaped homohexamer of HslV is capped on each side by a ring-shaped HslU homohexamer. The assembly of the HslU/HslV complex is dependent on binding of ATP.

It is found in the cytoplasm. In terms of biological role, ATPase subunit of a proteasome-like degradation complex; this subunit has chaperone activity. The binding of ATP and its subsequent hydrolysis by HslU are essential for unfolding of protein substrates subsequently hydrolyzed by HslV. HslU recognizes the N-terminal part of its protein substrates and unfolds these before they are guided to HslV for hydrolysis. The polypeptide is ATP-dependent protease ATPase subunit HslU (Thermotoga neapolitana (strain ATCC 49049 / DSM 4359 / NBRC 107923 / NS-E)).